Consider the following 361-residue polypeptide: Ankyrin repeat domain-containing protein 16 (361 aa).

9 ANK repeats span residues 36 to 66 (AGDTLLHCAARHGRQDILAYLVEAWSMDIEA), 70 to 99 (DYKRPLHEAASMGHRDCVRYLLGRGAVVDS), 103 to 132 (ADWTPLMMACTRKNLDVIQDLVEHGANPLL), 136 to 165 (DGWNSFHIASREGHPVILRYLLTVCPDAWK), 170 to 200 (IRRTPLHTAAMHGCLEAVQVLLERCHYEPDC), 204 to 233 (CGVTPFMDAIQCGHVSIAKLLLEQHKACSS), 238 to 268 (MGAQALHRAAVTGQDEAIRFLVCGLGIDVDV), 273 to 302 (SQLTALHYAAKEGQTNTVQTLLSLGADINS), and 306 to 335 (RNRSVLHLACAGQHVACTRLLLQSGLKDSE).

In terms of assembly, interacts with AARS; the interaction is direct. In terms of tissue distribution, widely expressed in brain (at protein level).

The protein resides in the cytoplasm. The protein localises to the nucleus. In terms of biological role, required to prevent the misactivation of serine (Ser) with tRNA(Ala) by promoting the hydrolysis of Ser-mischarged tRNA(Ala), thereby playing a role in translational fidelity. Binds directly to the catalytic domain of AARS/AlaRS and captures Ser that is misactivated by AARS/AlaRS, preventing the charging of Ser adenylates to tRNA(Ala) and precluding Ser misincorporation in nascent peptides. This chain is Ankyrin repeat domain-containing protein 16, found in Mus musculus (Mouse).